The sequence spans 761 residues: RNA-binding protein mde7 (761 aa).

Composition is skewed to polar residues over residues 31 to 46 (PNHS…NSLL), 58 to 83 (SRNS…TTPF), and 99 to 110 (SRNNSYLQGTAE). Disordered stretches follow at residues 31–110 (PNHS…GTAE) and 188–213 (HYFD…EASN). Residues 188 to 197 (HYFDDTDKSV) show a composition bias toward basic and acidic residues. Positions 199-211 (SKSSSGSNSLSEA) are enriched in low complexity. One can recognise an RRM 1 domain in the interval 223–289 (IVGGLPDDFD…SSTNNFTIIQ (67 aa)). Positions 442–466 (ESNSLSNQPNNFAQTSFDYQPNHPN) are enriched in polar residues. The segment at 442–468 (ESNSLSNQPNNFAQTSFDYQPNHPNAI) is disordered. In terms of domain architecture, RRM 2 spans 602–679 (NTIYVGNLSN…GGIRLSYSKN (78 aa)).

The sequence is that of RNA-binding protein mde7 (mde7) from Schizosaccharomyces pombe (strain 972 / ATCC 24843) (Fission yeast).